The sequence spans 278 residues: Putative ABC transporter ATP-binding protein MJ1572 (278 aa).

Residues 5-242 (YRLVDVSYKY…LDELNLDVPE (238 aa)) enclose the ABC transporter domain. 38-45 (GPNGAGKT) lines the ATP pocket.

The protein belongs to the ABC transporter superfamily.

It is found in the cell membrane. Functionally, probably part of an ABC transporter complex. Responsible for energy coupling to the transport system. The chain is Putative ABC transporter ATP-binding protein MJ1572 from Methanocaldococcus jannaschii (strain ATCC 43067 / DSM 2661 / JAL-1 / JCM 10045 / NBRC 100440) (Methanococcus jannaschii).